A 111-amino-acid chain; its full sequence is MIWRGRSTYRPRPRRSVPPPELIGPMLEPGDEEPQQEEPPTESRDPAPGQEREEDQGAAETQVPDLEADLQELSQSKTGGECGNGPDDQGKILPKSEQFKMPEGGDRQPQV.

The disordered stretch occupies residues 1–111; the sequence is MIWRGRSTYR…PEGGDRQPQV (111 aa). The segment covering 29 to 40 has biased composition (acidic residues); the sequence is PGDEEPQQEEPP. A compositionally biased stretch (basic and acidic residues) spans 97–111; that stretch reads EQFKMPEGGDRQPQV.

This sequence belongs to the GAGE family.

In Homo sapiens (Human), this protein is X antigen family member 3 (XAGE3).